A 588-amino-acid polypeptide reads, in one-letter code: 3-methylmercaptopropionyl-CoA dehydrogenase (588 aa).

Glu-435 acts as the Proton acceptor in catalysis.

Belongs to the acyl-CoA dehydrogenase family. The cofactor is FAD.

It catalyses the reaction 3-(methylsulfanyl)propanoyl-CoA + oxidized [electron-transfer flavoprotein] + H(+) = 3-(methylsulfanyl)acryloyl-CoA + reduced [electron-transfer flavoprotein]. In terms of biological role, involved in the assimilation of dimethylsulphoniopropionate (DMSP), an important compound in the fixation of carbon in marine phytoplankton, by mediating the conversion of 3-(methylthio)propanoyl-CoA (MMPA-CoA) to 3-(methylthio)acryloyl-CoA (MTA-CoA). The protein is 3-methylmercaptopropionyl-CoA dehydrogenase of Ruegeria pomeroyi (strain ATCC 700808 / DSM 15171 / DSS-3) (Silicibacter pomeroyi).